We begin with the raw amino-acid sequence, 469 residues long: tRNA(Ile)-lysidine synthase (469 aa).

26–31 (SGGPDS) is an ATP binding site.

It belongs to the tRNA(Ile)-lysidine synthase family.

The protein localises to the cytoplasm. It catalyses the reaction cytidine(34) in tRNA(Ile2) + L-lysine + ATP = lysidine(34) in tRNA(Ile2) + AMP + diphosphate + H(+). In terms of biological role, ligates lysine onto the cytidine present at position 34 of the AUA codon-specific tRNA(Ile) that contains the anticodon CAU, in an ATP-dependent manner. Cytidine is converted to lysidine, thus changing the amino acid specificity of the tRNA from methionine to isoleucine. In Shouchella clausii (strain KSM-K16) (Alkalihalobacillus clausii), this protein is tRNA(Ile)-lysidine synthase.